A 199-amino-acid chain; its full sequence is Holliday junction branch migration complex subunit RuvA (199 aa).

Residues methionine 1 to alanine 64 form a domain I region. The interval threonine 65–arginine 143 is domain II. The tract at residues leucine 144–alanine 154 is flexible linker. A domain III region spans residues alanine 154–alanine 199.

It belongs to the RuvA family. As to quaternary structure, homotetramer. Forms an RuvA(8)-RuvB(12)-Holliday junction (HJ) complex. HJ DNA is sandwiched between 2 RuvA tetramers; dsDNA enters through RuvA and exits via RuvB. An RuvB hexamer assembles on each DNA strand where it exits the tetramer. Each RuvB hexamer is contacted by two RuvA subunits (via domain III) on 2 adjacent RuvB subunits; this complex drives branch migration. In the full resolvosome a probable DNA-RuvA(4)-RuvB(12)-RuvC(2) complex forms which resolves the HJ.

It localises to the cytoplasm. The RuvA-RuvB-RuvC complex processes Holliday junction (HJ) DNA during genetic recombination and DNA repair, while the RuvA-RuvB complex plays an important role in the rescue of blocked DNA replication forks via replication fork reversal (RFR). RuvA specifically binds to HJ cruciform DNA, conferring on it an open structure. The RuvB hexamer acts as an ATP-dependent pump, pulling dsDNA into and through the RuvAB complex. HJ branch migration allows RuvC to scan DNA until it finds its consensus sequence, where it cleaves and resolves the cruciform DNA. This Azoarcus sp. (strain BH72) protein is Holliday junction branch migration complex subunit RuvA.